The sequence spans 374 residues: MAQINAVYYVSDSNEFIEEKAEKMATGLTAKPWQEMPEAEKQESFAYKGKVVSINEDPSYGEGSIVTISFPVAYEVPDFPSILTTTYGRLSYEPNVKLLDLQFSNDLVERFPGPLYGIEGIRDLVEVEGRPLAMSVAKGAIGRSIDSFHEQMLAHSYGGIDIIQDDERLFEHNWTPYEQRVPAGLAAIAEAAERTGRTPLYVVNLTGKTFELKERAREAIGLGAPALMLNVYAYGIDVLQGLREDPEIDVPIFAHSSLTGMMTRSKQHGIASRLLLGKLLRMAGADAVLFPSPYGRIGINPEEAQRVKDQLTMTTQMKRAFPIPSAGIDFQTIATVRQDFGEDVIINLGGSVHRYKGGVEAGGKAFIEALNSAN.

Residues K138, 164–167, H255, G327, and 349–350 contribute to the substrate site; these read QDDE and GG. D166 serves as a coordination point for Mg(2+).

Belongs to the RuBisCO large chain family. Type IV subfamily. As to quaternary structure, homodimer. The cofactor is Mg(2+).

It catalyses the reaction 5-methylsulfanyl-2,3-dioxopentyl phosphate = 2-hydroxy-5-methylsulfanyl-3-oxopent-1-enyl phosphate. Its pathway is amino-acid biosynthesis; L-methionine biosynthesis via salvage pathway; L-methionine from S-methyl-5-thio-alpha-D-ribose 1-phosphate: step 3/6. Its function is as follows. Catalyzes the enolization of 2,3-diketo-5-methylthiopentyl-1-phosphate (DK-MTP-1-P) into 2-hydroxy-3-keto-5-methylthiopentenyl-1-phosphate (HK-MTPenyl-1-P). This chain is Putative 2,3-diketo-5-methylthiopentyl-1-phosphate enolase (mtnW), found in Shouchella clausii (strain KSM-K16) (Alkalihalobacillus clausii).